The primary structure comprises 275 residues: Esterase AAEL000016 (275 aa).

The segment at 1 to 21 (MMANETAAKSTKSSPTPAVEP) is disordered. The segment covering 7–16 (AAKSTKSSPT) has biased composition (polar residues). Active-site charge relay system residues include serine 129, aspartate 187, and histidine 214. The tract at residues 253-275 (LVDDSGPAGNGVHDDDDDDDDSD) is disordered. Positions 266 to 275 (DDDDDDDDSD) are enriched in acidic residues.

Belongs to the LovG family.

In Aedes aegypti (Yellowfever mosquito), this protein is Esterase AAEL000016.